We begin with the raw amino-acid sequence, 107 residues long: Thioredoxin (107 aa).

Residues 2–107 form the Thioredoxin domain; that stretch reads SVSQVTDASF…LESTLNKYIS (106 aa). Catalysis depends on nucleophile residues Cys-31 and Cys-34. Cysteines 31 and 34 form a disulfide.

Belongs to the thioredoxin family.

The protein localises to the plastid. It localises to the chloroplast. Participates in various redox reactions through the reversible oxidation of its active center dithiol to a disulfide and catalyzes dithiol-disulfide exchange reactions. This is Thioredoxin (trxA) from Porphyra purpurea (Red seaweed).